The chain runs to 304 residues: tRNA dimethylallyltransferase (304 aa).

2–9 lines the ATP pocket; the sequence is GPTASGKT. Residue 4-9 coordinates substrate; it reads TASGKT. Interaction with substrate tRNA regions lie at residues 27–30, 151–155, 232–237, and 265–272; these read DSAL, QRINR, RCVGYR, and KRQITWLR.

This sequence belongs to the IPP transferase family. In terms of assembly, monomer. Mg(2+) is required as a cofactor.

The enzyme catalyses adenosine(37) in tRNA + dimethylallyl diphosphate = N(6)-dimethylallyladenosine(37) in tRNA + diphosphate. Functionally, catalyzes the transfer of a dimethylallyl group onto the adenine at position 37 in tRNAs that read codons beginning with uridine, leading to the formation of N6-(dimethylallyl)adenosine (i(6)A). This chain is tRNA dimethylallyltransferase, found in Actinobacillus pleuropneumoniae serotype 7 (strain AP76).